Here is a 165-residue protein sequence, read N- to C-terminus: K(+)/H(+) antiporter subunit KhtT (165 aa).

The region spanning 76-161 is the RCK C-terminal domain; sequence LESIEMAFSD…LKKLIHDFLS (86 aa).

In terms of assembly, the transporter is composed of the integral membrane protein KhtU and the regulatory protein KhtT.

The protein resides in the cell membrane. Binds cyclic di-AMP (c-di-AMP), which may regulate the activity. Its function is as follows. Required for activity of the potassium/proton antiporter KhtU. Involved in protection of the cell from methylglyoxal, a toxic by-product of glycolysis. In Bacillus subtilis (strain 168), this protein is K(+)/H(+) antiporter subunit KhtT.